A 464-amino-acid chain; its full sequence is Glutamate--tRNA ligase (464 aa).

Positions 11 to 21 match the 'HIGH' region motif; it reads PSPTGFIHLGN. The short motif at 243 to 247 is the 'KMSKS' region element; sequence KMSKR. ATP is bound at residue K246.

This sequence belongs to the class-I aminoacyl-tRNA synthetase family. Glutamate--tRNA ligase type 1 subfamily. As to quaternary structure, monomer.

The protein resides in the cytoplasm. The enzyme catalyses tRNA(Glu) + L-glutamate + ATP = L-glutamyl-tRNA(Glu) + AMP + diphosphate. In terms of biological role, catalyzes the attachment of glutamate to tRNA(Glu) in a two-step reaction: glutamate is first activated by ATP to form Glu-AMP and then transferred to the acceptor end of tRNA(Glu). The protein is Glutamate--tRNA ligase of Polaromonas naphthalenivorans (strain CJ2).